Reading from the N-terminus, the 644-residue chain is Probable potassium transport system protein Kup 2 (644 aa).

A disordered region spans residues 1–21; sequence MSSDAAAVADRDGSSPGHGGH. Helical transmembrane passes span 26–46, 69–89, 120–140, 155–175, 183–203, 231–251, 265–285, 312–332, 360–380, 390–410, 419–439, and 444–464; these read LGAM…TSPL, VLSL…VAII, IILL…ITPA, AGFA…LFMI, VGML…VLGT, LAFL…ALYA, WLVF…AMIL, LVIL…TGAF, IYIP…VMSF, YGIA…VVLI, LAAP…GANL, and DGGW…TTWG.

This sequence belongs to the HAK/KUP transporter (TC 2.A.72) family.

The protein localises to the cell inner membrane. It carries out the reaction K(+)(in) + H(+)(in) = K(+)(out) + H(+)(out). Transport of potassium into the cell. Likely operates as a K(+):H(+) symporter. The polypeptide is Probable potassium transport system protein Kup 2 (Rhizorhabdus wittichii (strain DSM 6014 / CCUG 31198 / JCM 15750 / NBRC 105917 / EY 4224 / RW1) (Sphingomonas wittichii)).